The sequence spans 209 residues: Large ribosomal subunit protein uL3 (209 aa).

The tract at residues threonine 133 to proline 152 is disordered. The residue at position 150 (glutamine 150) is an N5-methylglutamine.

The protein belongs to the universal ribosomal protein uL3 family. In terms of assembly, part of the 50S ribosomal subunit. Forms a cluster with proteins L14 and L19. Post-translationally, methylated by PrmB.

Its function is as follows. One of the primary rRNA binding proteins, it binds directly near the 3'-end of the 23S rRNA, where it nucleates assembly of the 50S subunit. This is Large ribosomal subunit protein uL3 from Yersinia enterocolitica serotype O:8 / biotype 1B (strain NCTC 13174 / 8081).